The sequence spans 263 residues: Elongin-A (263 aa).

Disordered stretches follow at residues 112-147 (KLEQSKQNKRIVPLEREPRAARPPKRPRPMSNYCPK) and 170-263 (SATS…PKRI). 2 stretches are compositionally biased toward polar residues: residues 186–206 (RSSSNATNTSTKRPLTSNTYP) and 214–229 (SFTSQNFKSFNAVKTQ). Low complexity predominate over residues 230 to 245 (PSSSSSPSISRPTSFP). Polar residues predominate over residues 253–263 (SRFSSQVPKRI).

It belongs to the ELA1 family. Heterodimer with elc1. Component of a CRL3 E3 ubiquitin ligase complex consisting of a cullin, the linker protein elc1, the substrate receptor pof4/ela1, and the RING protein rbx1. Interacts with skp1.

Functionally, as part of the CRL3 E3 ubiquitin ligase complex; polyubiquitylates monoubiquitylated RNA polymerase II subunit rpb1 to trigger its proteolysis; plays a role in global genomic repair. This chain is Elongin-A (pof4), found in Schizosaccharomyces pombe (strain 972 / ATCC 24843) (Fission yeast).